The sequence spans 563 residues: (-)-germacrene D synthase (563 aa).

Residues 44–71 (TEITAAEKEELEKQKEKVKNLLDQTPND) adopt a coiled-coil conformation. Residues D314 and D318 each contribute to the Mn(2+) site. The DDXXD motif signature appears at 314–318 (DDIYD). Homodimerization regions lie at residues 320-326 (YGSLDEL) and 392-429 (EAEW…VGME). Residues D459 and E467 each coordinate Mn(2+).

The protein belongs to the terpene synthase family. In terms of assembly, homodimer. Mn(2+) serves as cofactor. Requires Mg(2+) as cofactor. Expressed in peltate glandular trichomes. Present at low levels in flowers, leaves and stems.

The catalysed reaction is (2E,6E)-farnesyl diphosphate = (-)-germacrene D + diphosphate. The protein operates within secondary metabolite biosynthesis; terpenoid biosynthesis. Functionally, involved in the biosynthesis of phenolic sesquiterpenes natural products. Sesquiterpene synthase that catalyzes mainly the formation of (-)-germacrene D and minor amounts of other sesquiterpenes (e.g. bicyclo-germacrene) from farnesyl diphosphate (FPP). Also triggers moderate amounts formation of myrcene, limonene, terpinolene and linalool in the presence of geranyl diphosphate (GPP). This is (-)-germacrene D synthase from Origanum vulgare (Wild marjoram).